The primary structure comprises 187 residues: MESLQNHFLIAMPSLDDTFFERSVIYLCEHDDKGAMGIVINKPLGIEVSSLLEQMDLPAEQVFADIAQNAQVLMGGPVSQDRGFVLHTSQPYWANSTDLGSGLMLTTSRDVLTAIGGKRSPDKFLVALGYAGWGKHQLEQELAENSWLTIPATNALLFDVKHEDRWPQASRSLGFDAWQVSAQAGHA.

This sequence belongs to the UPF0301 (AlgH) family.

The chain is UPF0301 protein Sputcn32_2681 from Shewanella putrefaciens (strain CN-32 / ATCC BAA-453).